Reading from the N-terminus, the 396-residue chain is Ribosomal RNA large subunit methyltransferase I (396 aa).

A PUA domain is found at 2 to 81; sequence TVSIYLAKGR…EAIDKDFFVR (80 aa).

This sequence belongs to the methyltransferase superfamily. RlmI family.

The protein resides in the cytoplasm. The enzyme catalyses cytidine(1962) in 23S rRNA + S-adenosyl-L-methionine = 5-methylcytidine(1962) in 23S rRNA + S-adenosyl-L-homocysteine + H(+). Functionally, specifically methylates the cytosine at position 1962 (m5C1962) of 23S rRNA. This Aliivibrio fischeri (strain ATCC 700601 / ES114) (Vibrio fischeri) protein is Ribosomal RNA large subunit methyltransferase I.